We begin with the raw amino-acid sequence, 163 residues long: 3-isopropylmalate dehydratase small subunit (163 aa).

The protein belongs to the LeuD family. LeuD type 2 subfamily. In terms of assembly, heterodimer of LeuC and LeuD.

The enzyme catalyses (2R,3S)-3-isopropylmalate = (2S)-2-isopropylmalate. Its pathway is amino-acid biosynthesis; L-leucine biosynthesis; L-leucine from 3-methyl-2-oxobutanoate: step 2/4. Its function is as follows. Catalyzes the isomerization between 2-isopropylmalate and 3-isopropylmalate, via the formation of 2-isopropylmaleate. This is 3-isopropylmalate dehydratase small subunit from Thermococcus kodakarensis (strain ATCC BAA-918 / JCM 12380 / KOD1) (Pyrococcus kodakaraensis (strain KOD1)).